The primary structure comprises 181 residues: Adenine phosphoribosyltransferase (181 aa).

This sequence belongs to the purine/pyrimidine phosphoribosyltransferase family. As to quaternary structure, homodimer.

It is found in the cytoplasm. It catalyses the reaction AMP + diphosphate = 5-phospho-alpha-D-ribose 1-diphosphate + adenine. It functions in the pathway purine metabolism; AMP biosynthesis via salvage pathway; AMP from adenine: step 1/1. Functionally, catalyzes a salvage reaction resulting in the formation of AMP, that is energically less costly than de novo synthesis. The polypeptide is Adenine phosphoribosyltransferase (Shewanella amazonensis (strain ATCC BAA-1098 / SB2B)).